Reading from the N-terminus, the 469-residue chain is 3-isopropylmalate dehydratase large subunit (469 aa).

[4Fe-4S] cluster-binding residues include C347, C408, and C411.

The protein belongs to the aconitase/IPM isomerase family. LeuC type 1 subfamily. Heterodimer of LeuC and LeuD. [4Fe-4S] cluster is required as a cofactor.

The enzyme catalyses (2R,3S)-3-isopropylmalate = (2S)-2-isopropylmalate. It functions in the pathway amino-acid biosynthesis; L-leucine biosynthesis; L-leucine from 3-methyl-2-oxobutanoate: step 2/4. Its function is as follows. Catalyzes the isomerization between 2-isopropylmalate and 3-isopropylmalate, via the formation of 2-isopropylmaleate. In Actinobacillus pleuropneumoniae serotype 3 (strain JL03), this protein is 3-isopropylmalate dehydratase large subunit.